Reading from the N-terminus, the 410-residue chain is Peptidase T (410 aa).

His79 lines the Zn(2+) pocket. Asp81 is a catalytic residue. Asp142 is a Zn(2+) binding site. Glu176 serves as the catalytic Proton acceptor. Zn(2+)-binding residues include Glu177, Asp199, and His381.

The protein belongs to the peptidase M20B family. Zn(2+) serves as cofactor.

Its subcellular location is the cytoplasm. It carries out the reaction Release of the N-terminal residue from a tripeptide.. Functionally, cleaves the N-terminal amino acid of tripeptides. The polypeptide is Peptidase T (Listeria welshimeri serovar 6b (strain ATCC 35897 / DSM 20650 / CCUG 15529 / CIP 8149 / NCTC 11857 / SLCC 5334 / V8)).